Consider the following 409-residue polypeptide: Patellin-6 (409 aa).

The 179-residue stretch at 116–294 (EKLTEEDLGF…QYGGLSRPTD (179 aa)) folds into the CRAL-TRIO domain. The GOLD domain maps to 270–404 (AETLYKFIRP…VAAYRYTVRK (135 aa)).

It belongs to the patellin family.

It localises to the membrane. The protein localises to the cytoplasm. Its function is as follows. Carrier protein that may be involved in membrane-trafficking events associated with cell-plate formation during cytokinesis. Binds to some hydrophobic molecules such as phosphoinositides and promotes their transfer between the different cellular sites. The protein is Patellin-6 (PATL6) of Arabidopsis thaliana (Mouse-ear cress).